The primary structure comprises 349 residues: Tribbles homolog 3 (349 aa).

The segment at 1–122 (MRATSLAASA…QHVARPTEVL (122 aa)) is interaction with DDIT3/CHOP. The tract at residues 35–57 (VRDEPEPGPTPSLPPASDLSPAV) is disordered. Residues 63–310 (LGPYILLERE…ALGILLHPWL (248 aa)) form the Protein kinase domain. A disordered region spans residues 317–349 (VSPPRSDRREMDQVVPDGPQLEEAEEGEVGLYG). Positions 336 to 349 (QLEEAEEGEVGLYG) are enriched in acidic residues.

This sequence belongs to the protein kinase superfamily. CAMK Ser/Thr protein kinase family. Tribbles subfamily. As to quaternary structure, interacts with AKT1, AKT2, MAP2K1 and MAP2K7. Interacts with ATF4. Interacts with DDIT3/CHOP and inhibits its interaction with EP300/P300. Interacts with APOBEC3C. Interacts (via N-terminus) with APOBEC3A. Interacts with RELA. In terms of tissue distribution, detected only in the lung. Not detected in the heart, brain, spleen, liver, skeletal muscle, kidney and testis.

Its subcellular location is the nucleus. In terms of biological role, inactive protein kinase which acts as a regulator of the integrated stress response (ISR), a process for adaptation to various stress. Inhibits the transcriptional activity of DDIT3/CHOP and is involved in DDIT3/CHOP-dependent cell death during ER stress. May play a role in programmed neuronal cell death but does not appear to affect non-neuronal cells. Acts as a negative feedback regulator of the ATF4-dependent transcription during the ISR: while TRIB3 expression is promoted by ATF4, TRIB3 protein interacts with ATF4 and inhibits ATF4 transcription activity. Disrupts insulin signaling by binding directly to Akt kinases and blocking their activation. May bind directly to and mask the 'Thr-308' phosphorylation site in AKT1. Interacts with the NF-kappa-B transactivator p65 RELA and inhibits its phosphorylation and thus its transcriptional activation activity. Interacts with MAPK kinases and regulates activation of MAP kinases. Can inhibit APOBEC3A editing of nuclear DNA. This Rattus norvegicus (Rat) protein is Tribbles homolog 3 (Trib3).